The sequence spans 477 residues: Aspartyl/glutamyl-tRNA(Asn/Gln) amidotransferase subunit B (477 aa).

Belongs to the GatB/GatE family. GatB subfamily. In terms of assembly, heterotrimer of A, B and C subunits.

The catalysed reaction is L-glutamyl-tRNA(Gln) + L-glutamine + ATP + H2O = L-glutaminyl-tRNA(Gln) + L-glutamate + ADP + phosphate + H(+). It catalyses the reaction L-aspartyl-tRNA(Asn) + L-glutamine + ATP + H2O = L-asparaginyl-tRNA(Asn) + L-glutamate + ADP + phosphate + 2 H(+). In terms of biological role, allows the formation of correctly charged Asn-tRNA(Asn) or Gln-tRNA(Gln) through the transamidation of misacylated Asp-tRNA(Asn) or Glu-tRNA(Gln) in organisms which lack either or both of asparaginyl-tRNA or glutaminyl-tRNA synthetases. The reaction takes place in the presence of glutamine and ATP through an activated phospho-Asp-tRNA(Asn) or phospho-Glu-tRNA(Gln). The polypeptide is Aspartyl/glutamyl-tRNA(Asn/Gln) amidotransferase subunit B (Legionella pneumophila (strain Lens)).